The chain runs to 136 residues: MHLFFAHILAVSIVVRITDSCAATSGTTTTTIAPTTCTTCTTDLIGIVTGNDGDMTPTSAITADANGCSVITYTCERTPVVATDVVLITFYSDSQNPTDVGTENGVGTANVVMNCVNGQWVKEGIVINDVECQIIT.

This is an uncharacterized protein from Caenorhabditis elegans.